The following is a 525-amino-acid chain: GMP synthase [glutamine-hydrolyzing] (525 aa).

The Glutamine amidotransferase type-1 domain occupies 9–207; it reads RILILDFGSQ…VRDICQCEAL (199 aa). Cys86 (nucleophile) is an active-site residue. Active-site residues include His181 and Glu183. The GMPS ATP-PPase domain maps to 208–400; sequence WTPAKIIDDA…LGLPYDMLYR (193 aa). 235–241 is a binding site for ATP; the sequence is SGGVDSS.

In terms of assembly, homodimer.

The enzyme catalyses XMP + L-glutamine + ATP + H2O = GMP + L-glutamate + AMP + diphosphate + 2 H(+). Its pathway is purine metabolism; GMP biosynthesis; GMP from XMP (L-Gln route): step 1/1. Its function is as follows. Catalyzes the synthesis of GMP from XMP. The protein is GMP synthase [glutamine-hydrolyzing] of Escherichia coli (strain K12 / MC4100 / BW2952).